The primary structure comprises 586 residues: uncharacterized protein (586 aa).

Disordered regions lie at residues 17–64 (VRRT…ETEE) and 80–123 (HSCS…GGAN). The span at 28-37 (PSTSGSIAWT) shows a compositional bias: polar residues. Low complexity-rich tracts occupy residues 38 to 52 (SSES…VSSS) and 80 to 91 (HSCSAATTSQQS). Basic and acidic residues predominate over residues 94–110 (QSKEHRIGGIKKEEKPI). Gly residues predominate over residues 112 to 123 (MGGGSSENGGAN). A run of 12 helical transmembrane segments spans residues 151–171 (WVIL…WIQY), 191–211 (WTSM…AWLL), 218–238 (LSVL…LLST), 243–263 (FWVT…TLGI), 283–303 (LGVF…PLIV), 317–337 (TLFL…ICFF), 375–395 (FVIL…ISTL), 413–433 (YVGL…GFIL), 441–461 (LTTI…TLTI), 466–486 (MVLV…YLPI), 513–533 (IFGI…GTFT), and 536–556 (IIMS…REDL).

This sequence belongs to the major facilitator superfamily. Feline leukemia virus subgroup C receptor (TC 2.A.1.28.1) family.

It is found in the membrane. This is an uncharacterized protein from Caenorhabditis elegans.